Consider the following 440-residue polypeptide: Trigger factor (440 aa).

Residues 163–248 (NDTVSINFKG…INSIKEKVLP (86 aa)) enclose the PPIase FKBP-type domain.

It belongs to the FKBP-type PPIase family. Tig subfamily.

Its subcellular location is the cytoplasm. It carries out the reaction [protein]-peptidylproline (omega=180) = [protein]-peptidylproline (omega=0). Its function is as follows. Involved in protein export. Acts as a chaperone by maintaining the newly synthesized protein in an open conformation. Functions as a peptidyl-prolyl cis-trans isomerase. The polypeptide is Trigger factor (Finegoldia magna (strain ATCC 29328 / DSM 20472 / WAL 2508) (Peptostreptococcus magnus)).